The primary structure comprises 74 residues: Defensin J1-2 (74 aa).

The first 27 residues, 1–27 (MAGFSKVIATIFLMMMLVFATGMVAEA), serve as a signal peptide directing secretion. Intrachain disulfides connect Cys-30–Cys-74, Cys-41–Cys-61, Cys-47–Cys-68, and Cys-51–Cys-70.

This sequence belongs to the DEFL family. In terms of assembly, monomer. Expressed in flowers and in young fruits.

It localises to the secreted. In terms of biological role, plant defense peptide with antifungal activity against F.oxysporum and B.cinerea. The chain is Defensin J1-2 from Capsicum annuum (Capsicum pepper).